Here is a 224-residue protein sequence, read N- to C-terminus: Oxaloacetate tautomerase FAHD2, mitochondrial (224 aa).

Residues 1–30 (MATSMIQRLFKQGTKIVGVGLNYASHAKEL) constitute a mitochondrion transit peptide. 3 residues coordinate Mg(2+): E67, E69, and D98.

This sequence belongs to the FAH family. Requires Mg(2+) as cofactor. It depends on Mn(2+) as a cofactor.

Its subcellular location is the mitochondrion. The catalysed reaction is oxaloacetate = enol-oxaloacetate. Functionally, tautomerase that converts enol-oxaloacetate, a strong inhibitor of succinate dehydrogenase, to the physiological keto form of oxaloacetate. In Arabidopsis thaliana (Mouse-ear cress), this protein is Oxaloacetate tautomerase FAHD2, mitochondrial.